The primary structure comprises 120 residues: Seripauperin-20 (120 aa).

A helical transmembrane segment spans residues 7-25 (IAAGVAAIAAGASATTTLA).

Belongs to the SRP1/TIP1 family. Seripauperin subfamily.

Its subcellular location is the membrane. The chain is Seripauperin-20 (PAU20) from Saccharomyces cerevisiae (strain ATCC 204508 / S288c) (Baker's yeast).